Consider the following 350-residue polypeptide: UDP-N-acetylenolpyruvoylglucosamine reductase (350 aa).

One can recognise an FAD-binding PCMH-type domain in the interval 24 to 195 (HVDATARWLL…VAVEFNLPLL (172 aa)). Residue Arg-172 is part of the active site. Ser-245 acts as the Proton donor in catalysis. Glu-342 is a catalytic residue.

The protein belongs to the MurB family. FAD is required as a cofactor.

Its subcellular location is the cytoplasm. It catalyses the reaction UDP-N-acetyl-alpha-D-muramate + NADP(+) = UDP-N-acetyl-3-O-(1-carboxyvinyl)-alpha-D-glucosamine + NADPH + H(+). It functions in the pathway cell wall biogenesis; peptidoglycan biosynthesis. In terms of biological role, cell wall formation. This chain is UDP-N-acetylenolpyruvoylglucosamine reductase, found in Xanthomonas campestris pv. campestris (strain 8004).